The primary structure comprises 447 residues: NAC domain containing protein 50 (447 aa).

Residues Met1–Ala21 form a disordered region. An NAC domain is found at Leu27–Lys178. A DNA-binding region spans residues Leu126–Pro184. 2 disordered regions span residues Asp246–Ala303 and Lys371–Val392. Residues Thr281–Pro293 are compositionally biased toward basic and acidic residues. Residues Val392 to Ser447 adopt a coiled-coil conformation.

As to quaternary structure, interacts with JMJ14 and NAC052. As to expression, mostly expressed in floral organs, and, at low levels, in other organs.

The protein resides in the nucleus. Its function is as follows. Transcriptional repressor that binds to the motif 5'-(C/T)A(C/A)G-3' in the promoter of target genes. Also binds to the 5'-CTTGNNNNNCAAG-3' consensus sequence in chromatin. Can bind to the mitochondrial dysfunction motif (MDM) present in the upstream regions of mitochondrial dysfunction stimulon (MDS) genes involved in mitochondrial retrograde regulation (MRR). Together with NAC051/NAC052 and JMJ14, regulates gene expression and flowering time by associating with the histone demethylase JMJ14, probably by the promotion of RNA-mediated gene silencing. The polypeptide is NAC domain containing protein 50 (Arabidopsis thaliana (Mouse-ear cress)).